We begin with the raw amino-acid sequence, 428 residues long: Adenylosuccinate synthetase (428 aa).

GTP is bound by residues 12 to 18 (GDEGKGK) and 40 to 42 (GHT). The active-site Proton acceptor is Asp-13. 2 residues coordinate Mg(2+): Asp-13 and Gly-40. IMP-binding positions include 13–16 (DEGK), 38–41 (NAGH), Thr-129, Arg-143, Gln-224, Thr-239, and Arg-303. His-41 (proton donor) is an active-site residue. 299–305 (VTTGRIR) contributes to the substrate binding site. GTP contacts are provided by residues Arg-305, 331-333 (KVD), and 410-412 (AYG).

This sequence belongs to the adenylosuccinate synthetase family. As to quaternary structure, homodimer. Mg(2+) serves as cofactor.

It is found in the cytoplasm. It catalyses the reaction IMP + L-aspartate + GTP = N(6)-(1,2-dicarboxyethyl)-AMP + GDP + phosphate + 2 H(+). It participates in purine metabolism; AMP biosynthesis via de novo pathway; AMP from IMP: step 1/2. In terms of biological role, plays an important role in the de novo pathway of purine nucleotide biosynthesis. Catalyzes the first committed step in the biosynthesis of AMP from IMP. The sequence is that of Adenylosuccinate synthetase from Francisella tularensis subsp. tularensis (strain FSC 198).